Here is a 368-residue protein sequence, read N- to C-terminus: tRNA 2-selenouridine synthase (368 aa).

Residues 12-136 (FLGDAPLLDT…MRGFLLETIE (125 aa)) enclose the Rhodanese domain. Cys-95 functions as the S-selanylcysteine intermediate in the catalytic mechanism.

It belongs to the SelU family. Monomer.

It carries out the reaction 5-methylaminomethyl-2-thiouridine(34) in tRNA + selenophosphate + (2E)-geranyl diphosphate + H2O + H(+) = 5-methylaminomethyl-2-selenouridine(34) in tRNA + (2E)-thiogeraniol + phosphate + diphosphate. It catalyses the reaction 5-methylaminomethyl-2-thiouridine(34) in tRNA + (2E)-geranyl diphosphate = 5-methylaminomethyl-S-(2E)-geranyl-thiouridine(34) in tRNA + diphosphate. The catalysed reaction is 5-methylaminomethyl-S-(2E)-geranyl-thiouridine(34) in tRNA + selenophosphate + H(+) = 5-methylaminomethyl-2-(Se-phospho)selenouridine(34) in tRNA + (2E)-thiogeraniol. The enzyme catalyses 5-methylaminomethyl-2-(Se-phospho)selenouridine(34) in tRNA + H2O = 5-methylaminomethyl-2-selenouridine(34) in tRNA + phosphate. Its function is as follows. Involved in the post-transcriptional modification of the uridine at the wobble position (U34) of tRNA(Lys), tRNA(Glu) and tRNA(Gln). Catalyzes the conversion of 2-thiouridine (S2U-RNA) to 2-selenouridine (Se2U-RNA). Acts in a two-step process involving geranylation of 2-thiouridine (S2U) to S-geranyl-2-thiouridine (geS2U) and subsequent selenation of the latter derivative to 2-selenouridine (Se2U) in the tRNA chain. The sequence is that of tRNA 2-selenouridine synthase from Bordetella bronchiseptica (strain ATCC BAA-588 / NCTC 13252 / RB50) (Alcaligenes bronchisepticus).